The sequence spans 379 residues: Retron Se72 reverse transcriptase (379 aa).

In terms of domain architecture, Reverse transcriptase spans 1–245; sequence MNKPRFNGTP…SKLSVTGLWV (245 aa). 3 residues coordinate Mg(2+): aspartate 109, aspartate 188, and aspartate 189.

This sequence belongs to the bacterial reverse transcriptase family.

The catalysed reaction is DNA(n) + a 2'-deoxyribonucleoside 5'-triphosphate = DNA(n+1) + diphosphate. Its function is as follows. Reverse transcriptase (RT) component of antiviral defense system retron Se72, composed of a non-coding RNA (ncRNA), this reverse transcriptase (RT) and the following cold shock-like protein. Expression of retron Se72 confers protection against bacteriophage lambda. At multiplicity of infection (MOI) of 0.02 cultures slow growth when infected with lambda but do not collapse, at MOI 2 cultures enter growth stasis. Responsible for synthesis of msDNA (a branched molecule with RNA linked by a 2',5'-phosphodiester bond to ssDNA). The retron transcript serves as primer (from a conserved internal G residue) and template for the reaction, and codes for the RT. The DNA segment is predicted to be 72 bases long. This chain is Retron Se72 reverse transcriptase, found in Salmonella heidelberg (strain 579083-10).